The primary structure comprises 505 residues: Lysine--tRNA ligase (505 aa).

Mg(2+) contacts are provided by glutamate 415 and glutamate 422.

This sequence belongs to the class-II aminoacyl-tRNA synthetase family. Homodimer. Requires Mg(2+) as cofactor.

It is found in the cytoplasm. It carries out the reaction tRNA(Lys) + L-lysine + ATP = L-lysyl-tRNA(Lys) + AMP + diphosphate. This is Lysine--tRNA ligase from Cronobacter sakazakii (strain ATCC BAA-894) (Enterobacter sakazakii).